The sequence spans 32 residues: Photosystem II reaction center protein T (32 aa).

Met-1 carries the post-translational modification N-formylmethionine. Residues 1 to 2 (ME) are Lumenal-facing. A helical membrane pass occupies residues 3–23 (TITYVFIFACIIALFFFAIFF). At 24–32 (REPPRITKK) the chain is on the cytoplasmic side.

The protein belongs to the PsbT family. As to quaternary structure, PSII is composed of 1 copy each of membrane proteins PsbA, PsbB, PsbC, PsbD, PsbE, PsbF, PsbH, PsbI, PsbJ, PsbK, PsbL, PsbM, PsbT, PsbX, PsbY, PsbZ, Psb30/Ycf12, PsbO, CyanoQ (PsbQ), PsbU, PsbV and a large number of cofactors. It forms dimeric complexes. Part of a photosystem II (PSII) assembly intermediate complex PSII-I; crystallized from a strain deleted of psbJ, it forms monomeric PSII before addition of the oxygen evolving complex. PSII-I includes 3 assembly factors not found in mature PSII (Psb27, Psb28 and Psb34). The cofactor is PSII binds multiple chlorophylls, carotenoids and specific lipids..

Its subcellular location is the cellular thylakoid membrane. Found at the monomer-monomer interface of the photosystem II (PS II) dimer, plays a role in assembly and dimerization of PSII. PSII is a light-driven water plastoquinone oxidoreductase, using light energy to abstract electrons from H(2)O, generating a proton gradient subsequently used for ATP formation. This Thermosynechococcus vestitus (strain NIES-2133 / IAM M-273 / BP-1) protein is Photosystem II reaction center protein T.